We begin with the raw amino-acid sequence, 239 residues long: UPF0502 protein Bcen_5249 (239 aa).

The disordered stretch occupies residues 196–239 (IRGAKGRTEAPRGRSGATQCAGSTDGERTRHRRRRTGRRVLIAS). Residues 224–233 (TRHRRRRTGR) are compositionally biased toward basic residues.

It belongs to the UPF0502 family.

The sequence is that of UPF0502 protein Bcen_5249 from Burkholderia orbicola (strain AU 1054).